We begin with the raw amino-acid sequence, 2090 residues long: Nuclear pore complex protein Nup205 (2090 aa).

Belongs to the NUP186/NUP192/NUP205 family. In terms of assembly, part of the nuclear pore complex (NPC).

The protein localises to the nucleus. It is found in the nuclear pore complex. Plays a role in the nuclear pore complex (NPC) assembly and maintenance, but with limited role in NPC permeability. Required for specific nuclear import pathways such as Mad import. This chain is Nuclear pore complex protein Nup205, found in Drosophila melanogaster (Fruit fly).